A 363-amino-acid polypeptide reads, in one-letter code: MHKDEDQRLLGPAPLPNDPDRSLRPQVLDDFIGQEAARANLKIFIEAAKTRQEALDHVLFVGPPGLGKTTLSQIMAKELGVNFRSTSGPVIAKAGDLAALLTNLEERDVLFIDEIHRLNPAIEEILYPAMEDYQLDLIIGEGPAARSVKIDLAKFTLVAATTRLGLLTTPLRDRFGIPIRLNFYTIEELEYIVQRNARLFAVKISDDGAHEIARRARGTPRIAGRLLRRVCDFALVKQAKQIDRKIADEALSRLEVDHLGLDPLDRRYLLLIAETFLGGPVGIETIAAALSEPRDAIEDIVEPYLLQQGFIQRTARGRILTEKAWSHLGLAAPASTSIQKRTQLSDAQDNVSLQTTLWDGEDD.

Residues 1 to 23 (MHKDEDQRLLGPAPLPNDPDRSL) form a disordered region. Positions 1–184 (MHKDEDQRLL…FGIPIRLNFY (184 aa)) are large ATPase domain (RuvB-L). ATP contacts are provided by residues Leu23, Arg24, Gly65, Lys68, Thr69, Thr70, 131–133 (EDY), Arg174, Tyr184, and Arg221. Thr69 contributes to the Mg(2+) binding site. The small ATPAse domain (RuvB-S) stretch occupies residues 185 to 255 (TIEELEYIVQ…IADEALSRLE (71 aa)). The interval 258–363 (HLGLDPLDRR…QTTLWDGEDD (106 aa)) is head domain (RuvB-H). DNA contacts are provided by Arg294, Arg313, and Arg318.

Belongs to the RuvB family. As to quaternary structure, homohexamer. Forms an RuvA(8)-RuvB(12)-Holliday junction (HJ) complex. HJ DNA is sandwiched between 2 RuvA tetramers; dsDNA enters through RuvA and exits via RuvB. An RuvB hexamer assembles on each DNA strand where it exits the tetramer. Each RuvB hexamer is contacted by two RuvA subunits (via domain III) on 2 adjacent RuvB subunits; this complex drives branch migration. In the full resolvosome a probable DNA-RuvA(4)-RuvB(12)-RuvC(2) complex forms which resolves the HJ.

The protein resides in the cytoplasm. It catalyses the reaction ATP + H2O = ADP + phosphate + H(+). Functionally, the RuvA-RuvB-RuvC complex processes Holliday junction (HJ) DNA during genetic recombination and DNA repair, while the RuvA-RuvB complex plays an important role in the rescue of blocked DNA replication forks via replication fork reversal (RFR). RuvA specifically binds to HJ cruciform DNA, conferring on it an open structure. The RuvB hexamer acts as an ATP-dependent pump, pulling dsDNA into and through the RuvAB complex. RuvB forms 2 homohexamers on either side of HJ DNA bound by 1 or 2 RuvA tetramers; 4 subunits per hexamer contact DNA at a time. Coordinated motions by a converter formed by DNA-disengaged RuvB subunits stimulates ATP hydrolysis and nucleotide exchange. Immobilization of the converter enables RuvB to convert the ATP-contained energy into a lever motion, pulling 2 nucleotides of DNA out of the RuvA tetramer per ATP hydrolyzed, thus driving DNA branch migration. The RuvB motors rotate together with the DNA substrate, which together with the progressing nucleotide cycle form the mechanistic basis for DNA recombination by continuous HJ branch migration. Branch migration allows RuvC to scan DNA until it finds its consensus sequence, where it cleaves and resolves cruciform DNA. The protein is Holliday junction branch migration complex subunit RuvB of Bartonella tribocorum (strain CIP 105476 / IBS 506).